The chain runs to 180 residues: Adenine phosphoribosyltransferase (180 aa).

The protein belongs to the purine/pyrimidine phosphoribosyltransferase family. In terms of assembly, homodimer.

The protein resides in the cytoplasm. It carries out the reaction AMP + diphosphate = 5-phospho-alpha-D-ribose 1-diphosphate + adenine. It participates in purine metabolism; AMP biosynthesis via salvage pathway; AMP from adenine: step 1/1. In terms of biological role, catalyzes a salvage reaction resulting in the formation of AMP, that is energically less costly than de novo synthesis. In Marinomonas sp. (strain MWYL1), this protein is Adenine phosphoribosyltransferase.